A 72-amino-acid chain; its full sequence is 3-deoxy-manno-octulosonate cytidylyltransferase (72 aa).

The protein belongs to the KdsB family. In terms of assembly, homodimer.

Its subcellular location is the cytoplasm. It carries out the reaction 3-deoxy-alpha-D-manno-oct-2-ulosonate + CTP = CMP-3-deoxy-beta-D-manno-octulosonate + diphosphate. It participates in nucleotide-sugar biosynthesis; CMP-3-deoxy-D-manno-octulosonate biosynthesis; CMP-3-deoxy-D-manno-octulosonate from 3-deoxy-D-manno-octulosonate and CTP: step 1/1. Its pathway is bacterial outer membrane biogenesis; lipopolysaccharide biosynthesis. In terms of biological role, activates KDO (a required 8-carbon sugar) for incorporation into bacterial lipopolysaccharide in Gram-negative bacteria. The protein is 3-deoxy-manno-octulosonate cytidylyltransferase (kpsU) of Escherichia coli.